Here is a 407-residue protein sequence, read N- to C-terminus: Putative cystathionine beta-lyase (407 aa).

Position 237 is an N6-(pyridoxal phosphate)lysine (Lys237).

It belongs to the class-II pyridoxal-phosphate-dependent aminotransferase family. MalY/PatB cystathionine beta-lyase subfamily. Requires pyridoxal 5'-phosphate as cofactor.

The catalysed reaction is L,L-cystathionine + H2O = L-homocysteine + pyruvate + NH4(+). It carries out the reaction an S-substituted L-cysteine + H2O = a thiol + pyruvate + NH4(+). It functions in the pathway amino-acid biosynthesis; L-methionine biosynthesis via de novo pathway; L-homocysteine from L-cystathionine: step 1/1. This chain is Putative cystathionine beta-lyase, found in Mycobacterium tuberculosis (strain CDC 1551 / Oshkosh).